We begin with the raw amino-acid sequence, 223 residues long: Deoxyribose-phosphate aldolase (223 aa).

Catalysis depends on D89, which acts as the Proton donor/acceptor. The active-site Schiff-base intermediate with acetaldehyde is K152. K181 functions as the Proton donor/acceptor in the catalytic mechanism.

Belongs to the DeoC/FbaB aldolase family. DeoC type 1 subfamily.

It localises to the cytoplasm. The enzyme catalyses 2-deoxy-D-ribose 5-phosphate = D-glyceraldehyde 3-phosphate + acetaldehyde. It participates in carbohydrate degradation; 2-deoxy-D-ribose 1-phosphate degradation; D-glyceraldehyde 3-phosphate and acetaldehyde from 2-deoxy-alpha-D-ribose 1-phosphate: step 2/2. Catalyzes a reversible aldol reaction between acetaldehyde and D-glyceraldehyde 3-phosphate to generate 2-deoxy-D-ribose 5-phosphate. This Bacillus cereus (strain ZK / E33L) protein is Deoxyribose-phosphate aldolase.